Here is a 316-residue protein sequence, read N- to C-terminus: Olfactory receptor 4N4C (316 aa).

Topologically, residues 1 to 26 (MKIANNTVVTEFILLGLTQSQDIQLL) are cytoplasmic. Residues 27 to 47 (VFVLILIFYLIILPGNFLIIF) form a helical membrane-spanning segment. Topologically, residues 48–56 (TIRSDPGLT) are extracellular. Residues 57–77 (APLYLFLGNLAFLDASYSFIV) form a helical membrane-spanning segment. Topologically, residues 78–99 (APRMLVDFLSEKKVISYRGCIT) are cytoplasmic. A disulfide bond links C97 and C179. The chain crosses the membrane as a helical span at residues 100–120 (QLFFLHFLGGGEGLLLVVMAF). Over 121–143 (DRYIAICRPLHCSTVMNPRACYA) the chain is Extracellular. A helical membrane pass occupies residues 144–164 (MMLALWLGGFVHSIIQVVLIL). Residues 165–204 (RLPFCGPNQLDNFFCDVRQVIKLACTDMFVVELLMVFNSG) are Cytoplasmic-facing. A helical membrane pass occupies residues 205–225 (LMTLLCFLGLLASYAVILCHV). Residues 226 to 243 (RRAASEGKNKAMSTCTTR) are Extracellular-facing. The helical transmembrane segment at 244–264 (VIIILLMFGPAIFIYICPFRA) threads the bilayer. The Cytoplasmic portion of the chain corresponds to 265–268 (LPAD). The chain crosses the membrane as a helical span at residues 269–289 (KMVSLFHTVIFPLMNPMIYTL). Topologically, residues 290–316 (RNQEVKTSMKRLLSRHVVCQVDFIIRN) are extracellular.

Belongs to the G-protein coupled receptor 1 family.

The protein localises to the membrane. In terms of biological role, odorant receptor. The protein is Olfactory receptor 4N4C of Homo sapiens (Human).